The sequence spans 140 residues: Odorant-binding protein 10 (140 aa).

The signal sequence occupies residues 1-25 (MTSFRLANLTVFLVLLFCFMRGVHS).

The protein belongs to the PBP/GOBP family. High-level expression in female mouth parts, particularly in the proboscis (at protein level). Low-level expression in female antenna (at protein level). Female salivary gland. Female chemosensory organs: antenna, palp and proboscis. Male antenna, wing and maxillary palp. Expressed at higher levels in male tissues compared to female tissues. Not detected in midgut.

Its subcellular location is the secreted. Involved in modulation of blood-feeding behavior and capacity in female mosquitoes. Required for normal oviposition. Required for normal fecundity and fertility of female mosquitoes. Required for normal expression of VGA1 gene, which encodes the egg yolk protein vitellogenin-A1. Required for normal female longevity when mosquitoes are maintained on regular sugar meal. Its function is as follows. (Microbial infection) Facilitates shedding of dengue virus type 2 particles into mosquito saliva. Does not affect dengue virus type 2 replication or infection prevalence in midgut and salivary glands at 14 days after blood feeding. In terms of biological role, (Microbial infection) Facilitates shedding of Zika virus particles into mosquito saliva. Does not affect Zika virus replication or infection prevalence in midgut and salivary glands at 14 days after blood feeding. This is Odorant-binding protein 10 from Aedes aegypti (Yellowfever mosquito).